The primary structure comprises 1238 residues: ATP-dependent helicase/nuclease subunit A (1238 aa).

The 479-residue stretch at 12–490 (VSWTDDQWKA…IDLNANFRSR (479 aa)) folds into the UvrD-like helicase ATP-binding domain. 33–40 (AAAGSGKT) contributes to the ATP binding site. The UvrD-like helicase C-terminal domain occupies 510 to 818 (GEILYDDNAS…RLVTIHSSKG (309 aa)).

Belongs to the helicase family. AddA subfamily. As to quaternary structure, heterodimer of AddA and AddB/RexB. Requires Mg(2+) as cofactor.

The enzyme catalyses Couples ATP hydrolysis with the unwinding of duplex DNA by translocating in the 3'-5' direction.. It catalyses the reaction ATP + H2O = ADP + phosphate + H(+). Its function is as follows. The heterodimer acts as both an ATP-dependent DNA helicase and an ATP-dependent, dual-direction single-stranded exonuclease. Recognizes the chi site generating a DNA molecule suitable for the initiation of homologous recombination. The AddA nuclease domain is required for chi fragment generation; this subunit has the helicase and 3' -&gt; 5' nuclease activities. This is ATP-dependent helicase/nuclease subunit A from Lysinibacillus sphaericus (strain C3-41).